Consider the following 668-residue polypeptide: Eukaryotic translation initiation factor 3 subunit L (668 aa).

Over residues 1–17 the composition is skewed to polar residues; it reads MVADASQQGQSNGAAFN. Residues 1 to 42 are disordered; the sequence is MVADASQQGQSNGAAFNQQQQYQQQQQRQLFGGEEEFGDEEE. Over residues 18–32 the composition is skewed to low complexity; that stretch reads QQQQYQQQQQRQLFG. Residues 33 to 42 show a composition bias toward acidic residues; that stretch reads GEEEFGDEEE. Residues 358-552 enclose the PCI domain; it reads SFTHILVFIM…QVVNTSDLDF (195 aa). The tract at residues 625–668 is disordered; sequence AGVKAGPPAFSQRSGGAGRSSVNKSAPAPAGAWGSSKPQPSVTA. The span at 648 to 662 shows a compositional bias: low complexity; sequence KSAPAPAGAWGSSKP.

This sequence belongs to the eIF-3 subunit L family. As to quaternary structure, component of the eukaryotic translation initiation factor 3 (eIF-3) complex.

It is found in the cytoplasm. Its function is as follows. Component of the eukaryotic translation initiation factor 3 (eIF-3) complex, which is involved in protein synthesis of a specialized repertoire of mRNAs and, together with other initiation factors, stimulates binding of mRNA and methionyl-tRNAi to the 40S ribosome. The eIF-3 complex specifically targets and initiates translation of a subset of mRNAs involved in cell proliferation. The chain is Eukaryotic translation initiation factor 3 subunit L from Mycosarcoma maydis (Corn smut fungus).